Reading from the N-terminus, the 38-residue chain is Mu/omega-theraphotoxin-Mb1a (38 aa).

Cystine bridges form between cysteine 7–cysteine 21, cysteine 14–cysteine 26, and cysteine 20–cysteine 33. Threonine 38 carries the post-translational modification Threonine amide.

The protein belongs to the neurotoxin 10 (Hwtx-1) family. 28 (Jztx-11) subfamily. Expressed by the venom gland.

It is found in the secreted. In terms of biological role, paralytic toxin that inhibits insect voltage-gated sodium (Nav) and calcium (Cav) channels in P.americana (American cockroach) dorsal unpaired median (DUM) neurons, and inhibits the B.germanica (German cockroach) Nav channel (BgNaV1). Also shows a delay in fast inactivation when tested on BgNaV1. May act as a gating-modifier toxin on Nav and as a pore blocker on Cav. In vivo, reversibly paralyzes both L.cuprina (Australian sheep blowfly) and M.domestica (housefly), but does not affect larvae of H.armigera (cotton bollworms). The chain is Mu/omega-theraphotoxin-Mb1a from Monocentropus balfouri (Socotra Island blue baboon tarantula).